The following is a 200-amino-acid chain: Casparian strip membrane protein 1 (200 aa).

Residues 1–38 (MSTTIEIPAESSAVAKGKAPLIGASSSSYEKKGGYKKG) are Cytoplasmic-facing. A helical transmembrane segment spans residues 39 to 59 (IAIFDFILRLGAVISALSAAA). Topologically, residues 60–88 (TMGTSDETLPFFTQFFQFEAGYDDFPTFQ) are extracellular. The chain crosses the membrane as a helical span at residues 89–109 (FFVIAMGFVGGYLVLSLPFSV). Topologically, residues 110–121 (VAIIRPHAVGIR) are cytoplasmic. The chain crosses the membrane as a helical span at residues 122-142 (LLLLILDTVALTLNTAAAAAA). Over 143 to 175 (AAIVYLAHNGNQSANWLAVCQQFGDFCQKVSGG) the chain is Extracellular. Asparagine 153 is a glycosylation site (N-linked (GlcNAc...) asparagine). A helical transmembrane segment spans residues 176–196 (VVASFVSVLVFLLLVVMSAVA). Topologically, residues 197–200 (LRKH) are cytoplasmic.

Belongs to the Casparian strip membrane proteins (CASP) family. Homodimer and heterodimers.

The protein localises to the cell membrane. Functionally, regulates membrane-cell wall junctions and localized cell wall deposition. Required for establishment of the Casparian strip membrane domain (CSD) and the subsequent formation of Casparian strips, a cell wall modification of the root endodermis that determines an apoplastic barrier between the intraorganismal apoplasm and the extraorganismal apoplasm and prevents lateral diffusion. This Ricinus communis (Castor bean) protein is Casparian strip membrane protein 1.